A 264-amino-acid polypeptide reads, in one-letter code: tRNA pseudouridine synthase A (264 aa).

Asp-51 functions as the Nucleophile in the catalytic mechanism. Position 109 (Tyr-109) interacts with substrate.

The protein belongs to the tRNA pseudouridine synthase TruA family. As to quaternary structure, homodimer.

The catalysed reaction is uridine(38/39/40) in tRNA = pseudouridine(38/39/40) in tRNA. Functionally, formation of pseudouridine at positions 38, 39 and 40 in the anticodon stem and loop of transfer RNAs. The chain is tRNA pseudouridine synthase A from Vibrio vulnificus (strain CMCP6).